We begin with the raw amino-acid sequence, 357 residues long: Transactivator protein DR7 (357 aa).

The tract at residues 107 to 187 (LVGKDGAVYV…LLTVGGLCQT (81 aa)) is interaction with host p53.

Belongs to the herpesviridae US22 family. Interacts with host p53 and inhibits p53-activated transcription.

In terms of biological role, involved in transactivation. Displays transforming activity. The protein is Transactivator protein DR7 (DR7L) of Homo sapiens (Human).